The sequence spans 594 residues: UvrABC system protein C (594 aa).

The region spanning 14 to 91 is the GIY-YIG domain; sequence DQPGCYLMKD…IKKHDPKYNI (78 aa). The 36-residue stretch at 196–231 folds into the UVR domain; sequence KEVRSELETKMYEASEKLEFERAKELRDQIAHIDAI.

Belongs to the UvrC family. Interacts with UvrB in an incision complex.

It is found in the cytoplasm. The UvrABC repair system catalyzes the recognition and processing of DNA lesions. UvrC both incises the 5' and 3' sides of the lesion. The N-terminal half is responsible for the 3' incision and the C-terminal half is responsible for the 5' incision. The chain is UvrABC system protein C from Bacillus cereus (strain Q1).